The primary structure comprises 243 residues: Probable transcriptional regulatory protein PTH_1024 (243 aa).

The protein belongs to the TACO1 family.

The protein resides in the cytoplasm. The protein is Probable transcriptional regulatory protein PTH_1024 of Pelotomaculum thermopropionicum (strain DSM 13744 / JCM 10971 / SI).